A 376-amino-acid chain; its full sequence is Actin (376 aa).

This sequence belongs to the actin family.

Its subcellular location is the cytoplasm. The protein resides in the cytoskeleton. It carries out the reaction ATP + H2O = ADP + phosphate + H(+). Its function is as follows. Actins are highly conserved proteins that are involved in various types of cell motility and are ubiquitously expressed in all eukaryotic cells. The chain is Actin from Trypanosoma cruzi.